The primary structure comprises 536 residues: Probable galacturonosyltransferase 10 (536 aa).

At 1–16 (MRRRGGDSFRRAGRRK) the chain is on the cytoplasmic side. Residues 17–37 (ISNVVWWVLSGIALLLFFLIL) form a helical; Signal-anchor for type II membrane protein membrane-spanning segment. The Lumenal portion of the chain corresponds to 38-536 (SKAGHIEPRP…SPFMQQCNFH (499 aa)). N-linked (GlcNAc...) asparagine glycosylation is found at Asn64, Asn246, Asn300, Asn403, and Asn436.

Belongs to the glycosyltransferase 8 family. As to expression, expressed in roots, inflorescences, siliques, leaves and stems.

The protein localises to the golgi apparatus membrane. Its pathway is glycan metabolism; pectin biosynthesis. Its function is as follows. May be involved in pectin and/or xylans biosynthesis in cell walls. In Arabidopsis thaliana (Mouse-ear cress), this protein is Probable galacturonosyltransferase 10 (GAUT10).